We begin with the raw amino-acid sequence, 87 residues long: Large ribosomal subunit protein bL31B (87 aa).

It belongs to the bacterial ribosomal protein bL31 family. Type B subfamily. As to quaternary structure, part of the 50S ribosomal subunit.

The protein is Large ribosomal subunit protein bL31B of Burkholderia ambifaria (strain MC40-6).